The sequence spans 675 residues: Putative exonuclease GOR (675 aa).

Over residues 66–79 (VAKEAAPEASRHLG) the composition is skewed to basic and acidic residues. Disordered regions lie at residues 66–90 (VAKE…APEG) and 225–263 (AKRT…TATT). Residues 358–483 (MPGLSRAALY…VRDGRKESLD (126 aa)) form a GOR1-125 epitope region.

The protein belongs to the REXO1/REXO3 family.

It is found in the cytoplasm. Its subcellular location is the nucleus. This chain is Putative exonuclease GOR (REXO1L1P), found in Homo sapiens (Human).